The following is a 399-amino-acid chain: Elongation factor Tu (399 aa).

The 195-residue stretch at 10-204 folds into the tr-type G domain; that stretch reads KPHVNIGTIG…AVDASIPEPE (195 aa). A G1 region spans residues 19 to 26; that stretch reads GHVDHGKT. 19–26 is a binding site for GTP; the sequence is GHVDHGKT. Thr26 provides a ligand contact to Mg(2+). A G2 region spans residues 60–64; it reads GITIN. The tract at residues 81-84 is G3; sequence DCPG. Residues 81-85 and 136-139 contribute to the GTP site; these read DCPGH and NKCD. Residues 136–139 are G4; sequence NKCD. The G5 stretch occupies residues 174-176; it reads SGL.

Belongs to the TRAFAC class translation factor GTPase superfamily. Classic translation factor GTPase family. EF-Tu/EF-1A subfamily. In terms of assembly, monomer.

Its subcellular location is the cytoplasm. The catalysed reaction is GTP + H2O = GDP + phosphate + H(+). GTP hydrolase that promotes the GTP-dependent binding of aminoacyl-tRNA to the A-site of ribosomes during protein biosynthesis. This chain is Elongation factor Tu, found in Prochlorococcus marinus (strain MIT 9515).